The primary structure comprises 303 residues: Probable cell division protein WhiA (303 aa).

Residues 272-303 (SIQQLADSLSRPLTKSGVNHRLRKINKIADEL) constitute a DNA-binding region (H-T-H motif).

This sequence belongs to the WhiA family.

Its function is as follows. Involved in cell division and chromosome segregation. This is Probable cell division protein WhiA from Streptococcus sanguinis (strain SK36).